The following is a 473-amino-acid chain: 3-isopropylmalate dehydratase large subunit (473 aa).

[4Fe-4S] cluster contacts are provided by Cys-354, Cys-414, and Cys-417.

This sequence belongs to the aconitase/IPM isomerase family. LeuC type 1 subfamily. As to quaternary structure, heterodimer of LeuC and LeuD. Requires [4Fe-4S] cluster as cofactor.

It catalyses the reaction (2R,3S)-3-isopropylmalate = (2S)-2-isopropylmalate. It participates in amino-acid biosynthesis; L-leucine biosynthesis; L-leucine from 3-methyl-2-oxobutanoate: step 2/4. In terms of biological role, catalyzes the isomerization between 2-isopropylmalate and 3-isopropylmalate, via the formation of 2-isopropylmaleate. This Mycobacterium tuberculosis (strain CDC 1551 / Oshkosh) protein is 3-isopropylmalate dehydratase large subunit.